A 198-amino-acid chain; its full sequence is Pyridoxal 5'-phosphate synthase subunit PdxT (198 aa).

Residue 50–52 participates in L-glutamine binding; sequence GES. Residue Cys82 is the Nucleophile of the active site. Residues Arg114 and 143 to 144 contribute to the L-glutamine site; that span reads IR. Residues His179 and Glu181 each act as charge relay system in the active site.

It belongs to the glutaminase PdxT/SNO family. In the presence of PdxS, forms a dodecamer of heterodimers. Only shows activity in the heterodimer.

The enzyme catalyses aldehydo-D-ribose 5-phosphate + D-glyceraldehyde 3-phosphate + L-glutamine = pyridoxal 5'-phosphate + L-glutamate + phosphate + 3 H2O + H(+). It catalyses the reaction L-glutamine + H2O = L-glutamate + NH4(+). Its pathway is cofactor biosynthesis; pyridoxal 5'-phosphate biosynthesis. In terms of biological role, catalyzes the hydrolysis of glutamine to glutamate and ammonia as part of the biosynthesis of pyridoxal 5'-phosphate. The resulting ammonia molecule is channeled to the active site of PdxS. This Metallosphaera sedula (strain ATCC 51363 / DSM 5348 / JCM 9185 / NBRC 15509 / TH2) protein is Pyridoxal 5'-phosphate synthase subunit PdxT.